A 248-amino-acid polypeptide reads, in one-letter code: Granulin (248 aa).

The protein belongs to the polyhedrin family.

In terms of biological role, component of the virus occlusion bodies, which are large proteinaceous structures, that protect the virus from the outside environment for extended periods until they are ingested by insect larvae. In Adoxophyes orana granulovirus (AoGV), this protein is Granulin.